A 588-amino-acid polypeptide reads, in one-letter code: Calicin (588 aa).

Residues 28–98 (WDMALTVDHH…FYSGKVVISE (71 aa)) form the BTB domain. A BACK domain is found at 133–235 (CLRYLFLAEL…NAVSNKTLMF (103 aa)). Position 149 is a phosphoserine (serine 149). 6 Kelch repeats span residues 280–327 (SVVI…AAGR), 328–375 (YIYI…TCGG), 377–423 (VYSV…TKGD), 425–475 (NLYI…SFHQ), 476–525 (DNIL…IGDS), and 526–580 (KVFV…LAKL).

As to quaternary structure, interacts with CYLC1; the interaction may be relevant for proper acrosome attachment to the nuclear envelope. Expressed in testis and in spermatozoa.

The protein resides in the cytoplasm. Its subcellular location is the cytoskeleton. It localises to the perinuclear theca. The protein localises to the calyx. Functionally, required for both nuclear and acrosomal shaping during spermiogenesis. This Mus musculus (Mouse) protein is Calicin (Ccin).